The primary structure comprises 201 residues: LexA repressor (201 aa).

The segment at residues 28–48 (LREIGGHLGINGTLGVMKHLD) is a DNA-binding region (H-T-H motif). Active-site for autocatalytic cleavage activity residues include S120 and K157.

It belongs to the peptidase S24 family. Homodimer.

It catalyses the reaction Hydrolysis of Ala-|-Gly bond in repressor LexA.. Represses a number of genes involved in the response to DNA damage (SOS response), including recA and lexA. In the presence of single-stranded DNA, RecA interacts with LexA causing an autocatalytic cleavage which disrupts the DNA-binding part of LexA, leading to derepression of the SOS regulon and eventually DNA repair. This chain is LexA repressor, found in Geotalea uraniireducens (strain Rf4) (Geobacter uraniireducens).